A 181-amino-acid chain; its full sequence is Oligoribonuclease (181 aa).

An Exonuclease domain is found at Leu8–Leu171. The active site involves Tyr129.

The protein belongs to the oligoribonuclease family.

The protein resides in the cytoplasm. Its function is as follows. 3'-to-5' exoribonuclease specific for small oligoribonucleotides. This chain is Oligoribonuclease, found in Klebsiella pneumoniae subsp. pneumoniae (strain ATCC 700721 / MGH 78578).